Reading from the N-terminus, the 214-residue chain is Glutathione S-transferase 1 (214 aa).

The GST N-terminal domain maps to 2 to 83 (APMKLYGAVM…YAARKNKPEL (82 aa)). Residues S12, 41 to 42 (HK), 54 to 55 (QV), and 67 to 68 (ES) each bind glutathione. One can recognise a GST C-terminal domain in the interval 88 to 214 (NLEEAAMVDV…KVAALMKPSA (127 aa)).

It belongs to the GST superfamily. Phi family. In terms of assembly, homodimer or heterodimer of GST-I and GST-IV (=GST-II). In terms of tissue distribution, expressed in the stem and leaves, lower levels are seen in the pollen and endosperm.

The enzyme catalyses RX + glutathione = an S-substituted glutathione + a halide anion + H(+). In terms of biological role, conjugation of reduced glutathione to a wide number of exogenous and endogenous hydrophobic electrophiles. Involved in the detoxification of certain herbicides. The sequence is that of Glutathione S-transferase 1 (GST1) from Zea mays (Maize).